We begin with the raw amino-acid sequence, 290 residues long: 4-hydroxy-tetrahydrodipicolinate synthase (290 aa).

Residue Thr-44 participates in pyruvate binding. Tyr-132 acts as the Proton donor/acceptor in catalysis. Lys-160 serves as the catalytic Schiff-base intermediate with substrate. Position 202 (Ile-202) interacts with pyruvate.

The protein belongs to the DapA family. As to quaternary structure, homotetramer; dimer of dimers.

Its subcellular location is the cytoplasm. The catalysed reaction is L-aspartate 4-semialdehyde + pyruvate = (2S,4S)-4-hydroxy-2,3,4,5-tetrahydrodipicolinate + H2O + H(+). Its pathway is amino-acid biosynthesis; L-lysine biosynthesis via DAP pathway; (S)-tetrahydrodipicolinate from L-aspartate: step 3/4. In terms of biological role, catalyzes the condensation of (S)-aspartate-beta-semialdehyde [(S)-ASA] and pyruvate to 4-hydroxy-tetrahydrodipicolinate (HTPA). This Pelobacter propionicus (strain DSM 2379 / NBRC 103807 / OttBd1) protein is 4-hydroxy-tetrahydrodipicolinate synthase.